Consider the following 327-residue polypeptide: Malate dehydrogenase (327 aa).

12-18 (GAAGQIG) is a binding site for NAD(+). The substrate site is built by Arg-93 and Arg-99. Residues Asn-106, Gln-113, and 130 to 132 (VGN) contribute to the NAD(+) site. Substrate contacts are provided by Asn-132 and Arg-163. His-188 serves as the catalytic Proton acceptor.

It belongs to the LDH/MDH superfamily. MDH type 2 family.

It carries out the reaction (S)-malate + NAD(+) = oxaloacetate + NADH + H(+). In terms of biological role, catalyzes the reversible oxidation of malate to oxaloacetate. The chain is Malate dehydrogenase from Cupriavidus necator (strain ATCC 17699 / DSM 428 / KCTC 22496 / NCIMB 10442 / H16 / Stanier 337) (Ralstonia eutropha).